We begin with the raw amino-acid sequence, 152 residues long: Transcriptional regulator MraZ (152 aa).

SpoVT-AbrB domains are found at residues 5-51 and 80-123; these read VNSI…PLPE and AAEC…DEVL.

Belongs to the MraZ family. In terms of assembly, forms oligomers.

It is found in the cytoplasm. The protein localises to the nucleoid. The protein is Transcriptional regulator MraZ of Methylococcus capsulatus (strain ATCC 33009 / NCIMB 11132 / Bath).